We begin with the raw amino-acid sequence, 256 residues long: DNA repair protein RecO (256 aa).

This sequence belongs to the RecO family.

Its function is as follows. Involved in DNA repair and RecF pathway recombination. In Rhizobium leguminosarum bv. trifolii (strain WSM2304), this protein is DNA repair protein RecO.